The following is a 607-amino-acid chain: Elongation factor 4 (607 aa).

The tr-type G domain occupies 11-193; sequence EKIRNFSIIA…QIVEKVPAPQ (183 aa). GTP is bound by residues 23-28 and 140-143; these read DHGKST and NKID.

The protein belongs to the TRAFAC class translation factor GTPase superfamily. Classic translation factor GTPase family. LepA subfamily.

It is found in the cell membrane. It carries out the reaction GTP + H2O = GDP + phosphate + H(+). Required for accurate and efficient protein synthesis under certain stress conditions. May act as a fidelity factor of the translation reaction, by catalyzing a one-codon backward translocation of tRNAs on improperly translocated ribosomes. Back-translocation proceeds from a post-translocation (POST) complex to a pre-translocation (PRE) complex, thus giving elongation factor G a second chance to translocate the tRNAs correctly. Binds to ribosomes in a GTP-dependent manner. The polypeptide is Elongation factor 4 (Lactococcus lactis subsp. cremoris (strain SK11)).